The following is a 551-amino-acid chain: Serine/threonine-protein kinase ppk21 (551 aa).

Positions 24–43 (EARGERNPVKPQSSNVVPGT) are disordered. In terms of domain architecture, Protein kinase spans 55–315 (YVFGDIIGDG…TQQIKQFPFF (261 aa)). Residues 65 to 67 (SFS) and K84 contribute to the ATP site. Residues 86–131 (LDKKYIVKENKVKYVNIERDSMMRLNGFPGISRLFHTFQDDLKLYY) form a PIF-pocket region. ATP-binding positions include 134–136 (ELA) and E140. The active-site Proton acceptor is D179. ATP-binding residues include E183 and D197. S220 carries the post-translational modification Phosphoserine; by autocatalysis. At S538 the chain carries Phosphoserine.

It belongs to the protein kinase superfamily. AGC Ser/Thr protein kinase family. PDPK1 subfamily.

The protein localises to the cytoplasm. Its subcellular location is the nucleus. It is found in the cytoskeleton. It localises to the microtubule organizing center. The protein resides in the spindle pole body. The catalysed reaction is L-seryl-[protein] + ATP = O-phospho-L-seryl-[protein] + ADP + H(+). The enzyme catalyses L-threonyl-[protein] + ATP = O-phospho-L-threonyl-[protein] + ADP + H(+). The protein is Serine/threonine-protein kinase ppk21 (ppk21) of Schizosaccharomyces pombe (strain 972 / ATCC 24843) (Fission yeast).